A 326-amino-acid polypeptide reads, in one-letter code: MATH domain and coiled-coil domain-containing protein At3g58370 (326 aa).

The 127-residue stretch at D7 to I133 folds into the MATH domain. The stretch at L259–D312 forms a coiled coil.

In Arabidopsis thaliana (Mouse-ear cress), this protein is MATH domain and coiled-coil domain-containing protein At3g58370.